The sequence spans 288 residues: Quinate/shikimate dehydrogenase (288 aa).

Residues K71 and D107 each coordinate substrate. NAD(+) is bound by residues 132-135, 155-158, K205, 232-235, and G255; these read AGGA, NRRD, and CVYN.

The protein belongs to the shikimate dehydrogenase family. Homodimer.

The catalysed reaction is L-quinate + NAD(+) = 3-dehydroquinate + NADH + H(+). It catalyses the reaction L-quinate + NADP(+) = 3-dehydroquinate + NADPH + H(+). It carries out the reaction shikimate + NADP(+) = 3-dehydroshikimate + NADPH + H(+). The enzyme catalyses shikimate + NAD(+) = 3-dehydroshikimate + NADH + H(+). It functions in the pathway metabolic intermediate biosynthesis; chorismate biosynthesis; chorismate from D-erythrose 4-phosphate and phosphoenolpyruvate: step 4/7. Functionally, the actual biological function of YdiB remains unclear, nor is it known whether 3-dehydroshikimate or quinate represents the natural substrate. Catalyzes the reversible NAD-dependent reduction of both 3-dehydroshikimate (DHSA) and 3-dehydroquinate to yield shikimate (SA) and quinate, respectively. It can use both NAD or NADP for catalysis, however it has higher catalytic efficiency with NAD. The sequence is that of Quinate/shikimate dehydrogenase from Escherichia coli O81 (strain ED1a).